The primary structure comprises 310 residues: tRNA-cytidine(32) 2-sulfurtransferase (310 aa).

Positions 44 to 49 (SGGKDS) match the PP-loop motif motif. [4Fe-4S] cluster-binding residues include Cys119, Cys122, and Cys210.

This sequence belongs to the TtcA family. In terms of assembly, homodimer. Requires Mg(2+) as cofactor. [4Fe-4S] cluster is required as a cofactor.

Its subcellular location is the cytoplasm. It catalyses the reaction cytidine(32) in tRNA + S-sulfanyl-L-cysteinyl-[cysteine desulfurase] + AH2 + ATP = 2-thiocytidine(32) in tRNA + L-cysteinyl-[cysteine desulfurase] + A + AMP + diphosphate + H(+). It participates in tRNA modification. Its function is as follows. Catalyzes the ATP-dependent 2-thiolation of cytidine in position 32 of tRNA, to form 2-thiocytidine (s(2)C32). The sulfur atoms are provided by the cysteine/cysteine desulfurase (IscS) system. This chain is tRNA-cytidine(32) 2-sulfurtransferase, found in Saccharophagus degradans (strain 2-40 / ATCC 43961 / DSM 17024).